Here is a 374-residue protein sequence, read N- to C-terminus: MSSFAEARIDLDAISGNIALLAERAAGAQVMGVVKADGYGHGMVPAARAALAGGATWLGTAFIAEALQLRAAGIDAPILAWLVPPGEPLTEAIDAGIDLGIGSMWVINEVIDAARQARRQARIHLKVDTGLNRGGIGPADWSAAAAALARAEAAGLLTVTGVFSHLACADEPDNPATTAQLEAFHQALSVVDKAGLHPQVRHIANSAALLTRPDARFDLVRPGIATYGLSPIPGLDVPGLRPAMTLSATLVGCKRVRPGSGVSYGYRYVTDRETNLALVPLGYGDGVPRAATNRAPVFVAGRRRTIAGTVCMDQFVVDIGDDTVTPGDRAILFGPGDHGEPTAQDWADALDTISYEIVTRIGRRVPRVYTGAVR.

Lysine 35 serves as the catalytic Proton acceptor; specific for D-alanine. At lysine 35 the chain carries N6-(pyridoxal phosphate)lysine. Arginine 133 provides a ligand contact to substrate. The active-site Proton acceptor; specific for L-alanine is tyrosine 264. Methionine 312 is a substrate binding site.

It belongs to the alanine racemase family. It depends on pyridoxal 5'-phosphate as a cofactor.

The catalysed reaction is L-alanine = D-alanine. It participates in amino-acid biosynthesis; D-alanine biosynthesis; D-alanine from L-alanine: step 1/1. In terms of biological role, catalyzes the interconversion of L-alanine and D-alanine. May also act on other amino acids. The polypeptide is Alanine racemase (alr) (Thermobifida fusca (strain YX)).